We begin with the raw amino-acid sequence, 431 residues long: Fumarylacetoacetase (431 aa).

D133 contacts Ca(2+). Y135 provides a ligand contact to substrate. H140 acts as the Proton acceptor in catalysis. R149 is a substrate binding site. Ca(2+) contacts are provided by E209, E211, and D243. Residue D243 coordinates Mg(2+). Residues Q250 and Y254 each contribute to the substrate site. Mg(2+) contacts are provided by K263 and T267. T362 is a binding site for substrate.

This sequence belongs to the FAH family. Ca(2+) is required as a cofactor. Mg(2+) serves as cofactor.

The enzyme catalyses 4-fumarylacetoacetate + H2O = acetoacetate + fumarate + H(+). It functions in the pathway amino-acid degradation; L-phenylalanine degradation; acetoacetate and fumarate from L-phenylalanine: step 6/6. Its function is as follows. Use of phenylalanine and phenylacetate as a carbon source. In Emericella nidulans (strain FGSC A4 / ATCC 38163 / CBS 112.46 / NRRL 194 / M139) (Aspergillus nidulans), this protein is Fumarylacetoacetase (fahA).